Reading from the N-terminus, the 706-residue chain is Elongation factor G (706 aa).

Residues 8-290 (NRYRNIGICA…AVIDYLPAPT (283 aa)) form the tr-type G domain. GTP contacts are provided by residues 17 to 24 (AHVDAGKT), 88 to 92 (DTPGH), and 142 to 145 (NKMD).

This sequence belongs to the TRAFAC class translation factor GTPase superfamily. Classic translation factor GTPase family. EF-G/EF-2 subfamily.

It is found in the cytoplasm. Catalyzes the GTP-dependent ribosomal translocation step during translation elongation. During this step, the ribosome changes from the pre-translocational (PRE) to the post-translocational (POST) state as the newly formed A-site-bound peptidyl-tRNA and P-site-bound deacylated tRNA move to the P and E sites, respectively. Catalyzes the coordinated movement of the two tRNA molecules, the mRNA and conformational changes in the ribosome. This Stutzerimonas stutzeri (strain A1501) (Pseudomonas stutzeri) protein is Elongation factor G.